The primary structure comprises 572 residues: Proline--tRNA ligase (572 aa).

It belongs to the class-II aminoacyl-tRNA synthetase family. ProS type 1 subfamily. As to quaternary structure, homodimer.

Its subcellular location is the cytoplasm. It catalyses the reaction tRNA(Pro) + L-proline + ATP = L-prolyl-tRNA(Pro) + AMP + diphosphate. Catalyzes the attachment of proline to tRNA(Pro) in a two-step reaction: proline is first activated by ATP to form Pro-AMP and then transferred to the acceptor end of tRNA(Pro). As ProRS can inadvertently accommodate and process non-cognate amino acids such as alanine and cysteine, to avoid such errors it has two additional distinct editing activities against alanine. One activity is designated as 'pretransfer' editing and involves the tRNA(Pro)-independent hydrolysis of activated Ala-AMP. The other activity is designated 'posttransfer' editing and involves deacylation of mischarged Ala-tRNA(Pro). The misacylated Cys-tRNA(Pro) is not edited by ProRS. The protein is Proline--tRNA ligase of Shigella dysenteriae serotype 1 (strain Sd197).